A 301-amino-acid chain; its full sequence is Large ribosomal subunit protein uL18 (301 aa).

Belongs to the universal ribosomal protein uL18 family. In terms of assembly, component of the large ribosomal subunit (LSU). Mature N.crassa ribosomes consist of a small (40S) and a large (60S) subunit. The 40S small subunit contains 1 molecule of ribosomal RNA (18S rRNA) and at least 32 different proteins. The large 60S subunit contains 3 rRNA molecules (26S, 5.8S and 5S rRNA) and at least 42 different proteins.

It localises to the cytoplasm. In terms of biological role, component of the ribosome, a large ribonucleoprotein complex responsible for the synthesis of proteins in the cell. The small ribosomal subunit (SSU) binds messenger RNAs (mRNAs) and translates the encoded message by selecting cognate aminoacyl-transfer RNA (tRNA) molecules. The large subunit (LSU) contains the ribosomal catalytic site termed the peptidyl transferase center (PTC), which catalyzes the formation of peptide bonds, thereby polymerizing the amino acids delivered by tRNAs into a polypeptide chain. The nascent polypeptides leave the ribosome through a tunnel in the LSU and interact with protein factors that function in enzymatic processing, targeting, and the membrane insertion of nascent chains at the exit of the ribosomal tunnel. The polypeptide is Large ribosomal subunit protein uL18 (rpl-5) (Neurospora crassa (strain ATCC 24698 / 74-OR23-1A / CBS 708.71 / DSM 1257 / FGSC 987)).